Here is a 199-residue protein sequence, read N- to C-terminus: Protein GrpE (199 aa).

A compositionally biased stretch (basic and acidic residues) spans 1-10 (MTNQTEKEQV). Positions 1 to 44 (MTNQTEKEQVEQDVSQATELAQEAQEAQTQDVEPELQQNNEIDP) are disordered. The segment covering 16–30 (QATELAQEAQEAQTQ) has biased composition (low complexity).

Belongs to the GrpE family. In terms of assembly, homodimer.

The protein resides in the cytoplasm. Its function is as follows. Participates actively in the response to hyperosmotic and heat shock by preventing the aggregation of stress-denatured proteins, in association with DnaK and GrpE. It is the nucleotide exchange factor for DnaK and may function as a thermosensor. Unfolded proteins bind initially to DnaJ; upon interaction with the DnaJ-bound protein, DnaK hydrolyzes its bound ATP, resulting in the formation of a stable complex. GrpE releases ADP from DnaK; ATP binding to DnaK triggers the release of the substrate protein, thus completing the reaction cycle. Several rounds of ATP-dependent interactions between DnaJ, DnaK and GrpE are required for fully efficient folding. This chain is Protein GrpE, found in Glaesserella parasuis serovar 5 (strain SH0165) (Haemophilus parasuis).